The sequence spans 139 residues: Iron-sulfur cluster assembly 1 homolog, mitochondrial (139 aa).

Residues Cys52, Cys117, and Cys119 each coordinate Fe cation.

The protein belongs to the HesB/IscA family.

It localises to the mitochondrion. Functionally, involved in the assembly of mitochondrial iron-sulfur proteins. Probably involved in the binding of an intermediate of Fe/S cluster assembly. The protein is Iron-sulfur cluster assembly 1 homolog, mitochondrial (isca1) of Dictyostelium discoideum (Social amoeba).